The sequence spans 370 residues: Cytochrome b (370 aa).

4 consecutive transmembrane segments (helical) span residues 25-45, 69-90, 105-125, and 170-190; these read FGSMLLACLTLQLLTGFFLAV, WMMQNLHAIGASMFFICIYIHI, WLSGTTLLIMLMATAFFGYVL, and FFALHFILPFGIISLSSLHIL. Residues His75 and His89 each coordinate heme b. Positions 174 and 188 each coordinate heme b. His193 contacts a ubiquinone. Helical transmembrane passes span 218-238, 280-300, 312-332, and 339-358; these read YKDMLMLTIMTIMLLTIVSFF, LGGALALTMSIMILLTMPFTH, LMQLTFWTFTATFLVISWTAT, and FTTISQVAALMYFLFFISNP.

It belongs to the cytochrome b family. In terms of assembly, the cytochrome bc1 complex contains 3 respiratory subunits (MT-CYB, CYC1 and UQCRFS1), 2 core proteins (UQCRC1 and UQCRC2) and probably 6 low-molecular weight proteins. It depends on heme b as a cofactor.

The protein localises to the mitochondrion inner membrane. Its function is as follows. Component of the ubiquinol-cytochrome c reductase complex (complex III or cytochrome b-c1 complex) that is part of the mitochondrial respiratory chain. The b-c1 complex mediates electron transfer from ubiquinol to cytochrome c. Contributes to the generation of a proton gradient across the mitochondrial membrane that is then used for ATP synthesis. The sequence is that of Cytochrome b (MT-CYB) from Chilabothrus striatus (Haitian boa constrictor).